A 335-amino-acid polypeptide reads, in one-letter code: UDP-N-acetylenolpyruvoylglucosamine reductase 1 (335 aa).

Positions 36 to 202 (RIGGPAAVFA…LEVELLLKPG (167 aa)) constitute an FAD-binding PCMH-type domain. The active site involves Arg-181. Residue Ser-231 is the Proton donor of the active site. Glu-306 is a catalytic residue.

The protein belongs to the MurB family. FAD is required as a cofactor.

It localises to the cytoplasm. The enzyme catalyses UDP-N-acetyl-alpha-D-muramate + NADP(+) = UDP-N-acetyl-3-O-(1-carboxyvinyl)-alpha-D-glucosamine + NADPH + H(+). It functions in the pathway cell wall biogenesis; peptidoglycan biosynthesis. Its function is as follows. Cell wall formation. The protein is UDP-N-acetylenolpyruvoylglucosamine reductase 1 (murB1) of Corynebacterium glutamicum (strain ATCC 13032 / DSM 20300 / JCM 1318 / BCRC 11384 / CCUG 27702 / LMG 3730 / NBRC 12168 / NCIMB 10025 / NRRL B-2784 / 534).